We begin with the raw amino-acid sequence, 163 residues long: ATP synthase subunit b (163 aa).

The chain crosses the membrane as a helical span at residues 1 to 21 (MISFNLTSIVNLVGFLAFMFL).

Belongs to the ATPase B chain family. In terms of assembly, F-type ATPases have 2 components, F(1) - the catalytic core - and F(0) - the membrane proton channel. F(1) has five subunits: alpha(3), beta(3), gamma(1), delta(1), epsilon(1). F(0) has three main subunits: a(1), b(2) and c(10-14). The alpha and beta chains form an alternating ring which encloses part of the gamma chain. F(1) is attached to F(0) by a central stalk formed by the gamma and epsilon chains, while a peripheral stalk is formed by the delta and b chains.

Its subcellular location is the cell inner membrane. Functionally, f(1)F(0) ATP synthase produces ATP from ADP in the presence of a proton or sodium gradient. F-type ATPases consist of two structural domains, F(1) containing the extramembraneous catalytic core and F(0) containing the membrane proton channel, linked together by a central stalk and a peripheral stalk. During catalysis, ATP synthesis in the catalytic domain of F(1) is coupled via a rotary mechanism of the central stalk subunits to proton translocation. Component of the F(0) channel, it forms part of the peripheral stalk, linking F(1) to F(0). This chain is ATP synthase subunit b, found in Petrotoga mobilis (strain DSM 10674 / SJ95).